The chain runs to 838 residues: Major vault protein (838 aa).

MVP repeat units follow at residues 13–52 (VHIL…VVPP), 53–114 (RFYC…FKLK), 118–170 (VNTG…HIIS), 171–223 (PNTA…ITLT), 224–278 (DTEA…IVLN), 280–328 (KEYC…NVVS), 329–380 (KDQA…IALD), and 381–433 (KNEG…CMSE).

As to quaternary structure, the vault ribonucleoprotein particle is a huge (400 A x 670 A) cage structure of 12.9 MDa. It consists of a dimer of half-vaults, with each half-vault comprising 39 identical major vault protein (MVP) chains, PARP4 and one or more vault RNAs (vRNAs).

Its subcellular location is the cytoplasm. The protein localises to the nucleus. In terms of biological role, required for normal vault structure. Vaults are multi-subunit structures that may act as scaffolds for proteins involved in signal transduction. Vaults may also play a role in nucleo-cytoplasmic transport. This Trypanosoma cruzi (strain CL Brener) protein is Major vault protein.